We begin with the raw amino-acid sequence, 211 residues long: NADH-quinone oxidoreductase subunit I (211 aa).

The disordered stretch occupies residues methionine 1 to arginine 27. 2 consecutive 4Fe-4S ferredoxin-type domains span residues leucine 71 to alanine 101 and arginine 117 to aspartate 146. 8 residues coordinate [4Fe-4S] cluster: cysteine 81, cysteine 84, cysteine 87, cysteine 91, cysteine 126, cysteine 129, cysteine 132, and cysteine 136.

This sequence belongs to the complex I 23 kDa subunit family. NDH-1 is composed of 14 different subunits. Subunits NuoA, H, J, K, L, M, N constitute the membrane sector of the complex. It depends on [4Fe-4S] cluster as a cofactor.

The protein localises to the cell membrane. The enzyme catalyses a quinone + NADH + 5 H(+)(in) = a quinol + NAD(+) + 4 H(+)(out). Its function is as follows. NDH-1 shuttles electrons from NADH, via FMN and iron-sulfur (Fe-S) centers, to quinones in the respiratory chain. The immediate electron acceptor for the enzyme in this species is believed to be menaquinone. Couples the redox reaction to proton translocation (for every two electrons transferred, four hydrogen ions are translocated across the cytoplasmic membrane), and thus conserves the redox energy in a proton gradient. The sequence is that of NADH-quinone oxidoreductase subunit I from Mycobacterium tuberculosis (strain ATCC 25177 / H37Ra).